The following is a 111-amino-acid chain: Cytochrome c (111 aa).

Ala1 carries the post-translational modification N-acetylalanine. Cys22, Cys25, and His26 together coordinate heme c. Residue Lys80 is modified to N6,N6,N6-trimethyllysine. Met88 lines the heme c pocket. An N6,N6,N6-trimethyllysine modification is found at Lys94.

This sequence belongs to the cytochrome c family. Binds 1 heme c group covalently per subunit.

The protein resides in the mitochondrion intermembrane space. Electron carrier protein. The oxidized form of the cytochrome c heme group can accept an electron from the heme group of the cytochrome c1 subunit of cytochrome reductase. Cytochrome c then transfers this electron to the cytochrome oxidase complex, the final protein carrier in the mitochondrial electron-transport chain. The sequence is that of Cytochrome c from Cucurbita maxima (Pumpkin).